Reading from the N-terminus, the 338-residue chain is Glycerol-3-phosphate dehydrogenase [NAD(P)+] (338 aa).

Residues serine 14, phenylalanine 15, arginine 35, and lysine 109 each contribute to the NADPH site. Residues lysine 109 and glycine 137 each coordinate sn-glycerol 3-phosphate. Position 141 (alanine 141) interacts with NADPH. 5 residues coordinate sn-glycerol 3-phosphate: lysine 192, aspartate 247, serine 257, arginine 258, and asparagine 259. Lysine 192 (proton acceptor) is an active-site residue. Arginine 258 is a binding site for NADPH. Leucine 282 and glutamate 284 together coordinate NADPH.

This sequence belongs to the NAD-dependent glycerol-3-phosphate dehydrogenase family.

Its subcellular location is the cytoplasm. The enzyme catalyses sn-glycerol 3-phosphate + NAD(+) = dihydroxyacetone phosphate + NADH + H(+). It carries out the reaction sn-glycerol 3-phosphate + NADP(+) = dihydroxyacetone phosphate + NADPH + H(+). It participates in membrane lipid metabolism; glycerophospholipid metabolism. Functionally, catalyzes the reduction of the glycolytic intermediate dihydroxyacetone phosphate (DHAP) to sn-glycerol 3-phosphate (G3P), the key precursor for phospholipid synthesis. The sequence is that of Glycerol-3-phosphate dehydrogenase [NAD(P)+] from Rickettsia rickettsii (strain Iowa).